A 232-amino-acid polypeptide reads, in one-letter code: LexA repressor (232 aa).

The segment at residues 26-46 (FDEMKDALDLRSKSGIHRLIT) is a DNA-binding region (H-T-H motif). Residues S153 and K191 each act as for autocatalytic cleavage activity in the active site.

It belongs to the peptidase S24 family. Homodimer.

It catalyses the reaction Hydrolysis of Ala-|-Gly bond in repressor LexA.. Its function is as follows. Represses a number of genes involved in the response to DNA damage (SOS response), including recA and lexA. In the presence of single-stranded DNA, RecA interacts with LexA causing an autocatalytic cleavage which disrupts the DNA-binding part of LexA, leading to derepression of the SOS regulon and eventually DNA repair. In Afipia carboxidovorans (strain ATCC 49405 / DSM 1227 / KCTC 32145 / OM5) (Oligotropha carboxidovorans), this protein is LexA repressor.